A 515-amino-acid chain; its full sequence is GMP synthase [glutamine-hydrolyzing] (515 aa).

The region spanning 10-200 (TIIVLDFGSQ…VFGVCGCSEG (191 aa)) is the Glutamine amidotransferase type-1 domain. Cysteine 87 acts as the Nucleophile in catalysis. Catalysis depends on residues histidine 174 and glutamate 176. The GMPS ATP-PPase domain maps to 201–390 (WNMENFIEVE…LGIPDEIVWR (190 aa)). Residue 228 to 234 (SGGVDSS) participates in ATP binding.

As to quaternary structure, homodimer.

It carries out the reaction XMP + L-glutamine + ATP + H2O = GMP + L-glutamate + AMP + diphosphate + 2 H(+). It functions in the pathway purine metabolism; GMP biosynthesis; GMP from XMP (L-Gln route): step 1/1. Catalyzes the synthesis of GMP from XMP. The chain is GMP synthase [glutamine-hydrolyzing] from Bacillus thuringiensis subsp. konkukian (strain 97-27).